Consider the following 559-residue polypeptide: Formate--tetrahydrofolate ligase (559 aa).

68–75 (TPAGEGKT) contacts ATP.

Belongs to the formate--tetrahydrofolate ligase family.

The enzyme catalyses (6S)-5,6,7,8-tetrahydrofolate + formate + ATP = (6R)-10-formyltetrahydrofolate + ADP + phosphate. Its pathway is one-carbon metabolism; tetrahydrofolate interconversion. This chain is Formate--tetrahydrofolate ligase, found in Rhizobium etli (strain CIAT 652).